The chain runs to 470 residues: Sugar transporter ESL1 (470 aa).

An Essential for the localization to the vacuole membrane motif is present at residues 10–16; the sequence is LEAGLLL. Transmembrane regions (helical) follow at residues 28-48, 68-88, 99-119, 130-150, 157-177, 186-206, 268-288, 303-323, 332-352, 368-388, 404-424, and 430-450; these read ITAV…CFGC, VAQY…GAIF, KGTM…VALA, LSTG…IAEI, GAFV…FYVI, LALI…FIPE, VVIG…GLMY, IGSM…LILV, LLAS…SFCF, IGVV…PWII, LVTL…NFML, and GTFL…YAMV.

It belongs to the major facilitator superfamily. Sugar transporter (TC 2.A.1.1) family. As to expression, expressed in both shoots and roots. In roots, strongly expressed in pericycle and xylem parenchyma cells, and to a lesser extent in the root endodermis. In flowers, expressed in sepals.

It is found in the vacuole membrane. Its subcellular location is the vesicle. Sugar transporter. Transports monosaccharides across the vacuolar membrane independently from a proton gradient. May function coordinately with the vacuolar invertase to regulate osmotic pressure by affecting the accumulation of sugar in the cells under abiotic stress conditions. The chain is Sugar transporter ESL1 from Arabidopsis thaliana (Mouse-ear cress).